The chain runs to 2048 residues: Myoferlin (2048 aa).

A C2 1 domain is found at 1–101; that stretch reads MLRVIVESAT…IGDQNRSLPY (101 aa). The Cytoplasmic portion of the chain corresponds to 1–2012; that stretch reads MLRVIVESAT…MRFIVWRRFK (2012 aa). The tract at residues 124–176 is disordered; sequence YTPPSAPHPNDPSGTSVPGMGEEEEEDQGDEDRVDGIVRGPGPKGPSGTVSEA. Over residues 144–156 the composition is skewed to acidic residues; the sequence is GEEEEEDQGDEDR. Phosphoserine occurs at positions 170 and 174. 2 consecutive C2 domains span residues 183 to 300 and 339 to 475; these read TKGK…RKWL and DSDD…EATT. Positions 186 to 281 are necessary for interaction with EHD2; that stretch reads KSSRRMLSNK…RADCLMGEFK (96 aa). 5 residues coordinate Ca(2+): aspartate 390, aspartate 396, aspartate 444, aspartate 446, and aspartate 452. Residues lysine 540 and lysine 871 each carry the N6-acetyllysine modification. C2 domains are found at residues 1110 to 1238 and 1269 to 1397; these read GANT…LLWH and LPSQ…GKED. Ca(2+)-binding residues include aspartate 1142, aspartate 1148, aspartate 1204, and aspartate 1206. Lysine 1494 carries the N6-acetyllysine modification. C2 domains lie at 1523-1641 and 1759-1907; these read PAPP…SHCG and GPPG…EKCS. Residues aspartate 1556, aspartate 1562, aspartate 1611, aspartate 1613, aspartate 1878, serine 1881, and aspartate 1884 each contribute to the Ca(2+) site. A compositionally biased stretch (basic and acidic residues) spans 1964-1975; the sequence is EADERPAGKGRS. Residues 1964 to 1986 form a disordered region; it reads EADERPAGKGRSEPNMNPKLDPP. Residues 2013-2033 traverse the membrane as a helical segment; sequence WVIIGLLLLLILLLFVAVLLY. The Extracellular segment spans residues 2034–2048; it reads SLPNYLSMKIVRPNA.

It belongs to the ferlin family. Interacts with EHD1. Interacts with EHD2; the interaction is direct. Interacts with DNM2 and KDR. Interacts with RIPOR2. Requires Ca(2+) as cofactor. Expressed in myoblasts (at protein level). Expressed in endothelial cells.

The protein resides in the cell membrane. It is found in the nucleus membrane. It localises to the cytoplasmic vesicle membrane. In terms of biological role, calcium/phospholipid-binding protein that plays a role in the plasmalemma repair mechanism of endothelial cells that permits rapid resealing of membranes disrupted by mechanical stress. Involved in endocytic recycling. Implicated in VEGF signal transduction by regulating the levels of the receptor KDR. In Mus musculus (Mouse), this protein is Myoferlin (Myof).